We begin with the raw amino-acid sequence, 170 residues long: Cathelicidin antimicrobial peptide (170 aa).

The signal sequence occupies residues 1 to 30 (MKTQRDGPSLGRWSLVLLLLGLTMPLAITA). Positions 31–131 (QVLSYQEAVL…DISCDKDERK (101 aa)) are cleaved as a propeptide — cathelin-like domain (CLD). Disulfide bonds link C86-C97 and C108-C125. Residues 150–162 (FKKIGQKINDFLG) are active core.

It belongs to the cathelicidin family. Monomer, homodimer or homotrimer (in vitro). Oligomerizes as tetra- or hexamer in solution (in vitro). Post-translationally, proteolytically cleaved by proteinase PRTN3 into antibacterial peptide LL-37. Proteolytically cleaved by cathepsin CTSG and neutrophil elastase ELANE. In terms of processing, resistant to proteolytic degradation in solution, and when bound to both zwitterionic (mimicking mammalian membranes) and negatively charged membranes (mimicking bacterial membranes). After secretion onto the skin surface, the CAMP gene product is processed by a serine protease-dependent mechanism into multiple novel antimicrobial peptides distinct from and shorter than cathelicidin LL-37. These peptides show enhanced antimicrobial action, acquiring the ability to kill skin pathogens such as S.aureus, E.coli and C.albicans. These peptides have lost the ability to stimulate CXCL8/IL8 release from keratinocytes. The peptides act synergistically, killing bacteria at lower concentrations when present together, and maintain activity at increased salt condition.

Its subcellular location is the secreted. The protein localises to the vesicle. Functionally, antimicrobial protein that is an integral component of the innate immune system. Binds to bacterial lipopolysaccharides (LPS). Acts via neutrophil N-formyl peptide receptors to enhance the release of CXCL2. Postsecretory processing generates multiple cathelicidin antimicrobial peptides with various lengths which act as a topical antimicrobial defense in sweat on skin. The unprocessed precursor form, cathelicidin antimicrobial peptide, inhibits the growth of Gram-negative E.coli and E.aerogenes with efficiencies comparable to that of the mature peptide LL-37 (in vitro). Its function is as follows. Antimicrobial peptide that is an integral component of the innate immune system. Binds to bacterial lipopolysaccharides (LPS). Causes membrane permeabilization by forming transmembrane pores (in vitro). Causes lysis of E.coli. Exhibits antimicrobial activity against Gram-negative bacteria such as P.aeruginosa, S.typhimurium, E.aerogenes, E.coli and P.syringae, Gram-positive bacteria such as L.monocytogenes, S.epidermidis, S.pyogenes and S.aureus, as well as vancomycin-resistant enterococci (in vitro). Exhibits antimicrobial activity against methicillin-resistant S.aureus, P.mirabilis, and C.albicans in low-salt media, but not in media containing 100 mM NaCl (in vitro). Forms chiral supramolecular assemblies with quinolone signal (PQS) molecules of P.aeruginosa, which may lead to interference of bacterial quorum signaling and perturbance of bacterial biofilm formation. May form supramolecular fiber-like assemblies on bacterial membranes. Induces cytokine and chemokine producation as well as TNF/TNFA and CSF2/GMCSF production in normal human keratinocytes. Exhibits hemolytic activity against red blood cells. Exhibits antimicrobial activity against E.coli and B.megaterium (in vitro). The sequence is that of Cathelicidin antimicrobial peptide from Cebus capucinus (White-faced sapajou).